We begin with the raw amino-acid sequence, 180 residues long: Large ribosomal subunit protein uL6 (180 aa).

Belongs to the universal ribosomal protein uL6 family. Part of the 50S ribosomal subunit.

Its function is as follows. This protein binds to the 23S rRNA, and is important in its secondary structure. It is located near the subunit interface in the base of the L7/L12 stalk, and near the tRNA binding site of the peptidyltransferase center. The chain is Large ribosomal subunit protein uL6 from Clostridium kluyveri (strain NBRC 12016).